We begin with the raw amino-acid sequence, 131 residues long: Small ribosomal subunit protein uS8 (131 aa).

The protein belongs to the universal ribosomal protein uS8 family. As to quaternary structure, part of the 30S ribosomal subunit. Contacts proteins S5 and S12.

Functionally, one of the primary rRNA binding proteins, it binds directly to 16S rRNA central domain where it helps coordinate assembly of the platform of the 30S subunit. This is Small ribosomal subunit protein uS8 from Chlorobaculum tepidum (strain ATCC 49652 / DSM 12025 / NBRC 103806 / TLS) (Chlorobium tepidum).